A 249-amino-acid chain; its full sequence is Cyclin-dependent kinase inhibitor 2 (249 aa).

The tract at residues 118 to 180 (KVCTQAGEDH…MCRRSSTTSA (63 aa)) is disordered. Residues 161-180 (AESNQEAKQQMCRRSSTTSA) are compositionally biased toward polar residues.

This sequence belongs to the CDI family. ICK/KRP subfamily.

The protein is Cyclin-dependent kinase inhibitor 2 (KRP2) of Oryza sativa subsp. japonica (Rice).